The primary structure comprises 155 residues: Small ribosomal subunit protein uS7cz/uS7cy (155 aa).

It belongs to the universal ribosomal protein uS7 family. Part of the 30S ribosomal subunit.

The protein resides in the plastid. Its subcellular location is the chloroplast. One of the primary rRNA binding proteins, it binds directly to 16S rRNA where it nucleates assembly of the head domain of the 30S subunit. This chain is Small ribosomal subunit protein uS7cz/uS7cy (rps7-A), found in Chloranthus spicatus (Chulantree).